Reading from the N-terminus, the 415-residue chain is YDG domain-containing protein At5g47160 (415 aa).

The segment at 163–186 (KKLSNASRLRANAHRPTQHKDERR) is disordered. The 146-residue stretch at 262–407 (GSVPGIKVGD…NILFKFKLRR (146 aa)) folds into the YDG domain.

The protein localises to the nucleus. The protein is YDG domain-containing protein At5g47160 of Arabidopsis thaliana (Mouse-ear cress).